The primary structure comprises 197 residues: Adenylate kinase (197 aa).

Position 12–17 (12–17 (GSGKTT)) interacts with ATP. Positions 34–63 (STGDMLREEVASGSELGKTIESYIAKGALV) are NMP. AMP-binding positions include T35, R40, 61–63 (ALV), 88–91 (GYPR), and Q95. The tract at residues 130–144 (GRRAEAAPGEERSDD) is LID. R131 serves as a coordination point for ATP. AMP contacts are provided by R141 and R152. R180 provides a ligand contact to ATP.

It belongs to the adenylate kinase family. Monomer.

It localises to the cytoplasm. It carries out the reaction AMP + ATP = 2 ADP. The protein operates within purine metabolism; AMP biosynthesis via salvage pathway; AMP from ADP: step 1/1. Catalyzes the reversible transfer of the terminal phosphate group between ATP and AMP. Plays an important role in cellular energy homeostasis and in adenine nucleotide metabolism. The sequence is that of Adenylate kinase from Sulfurovum sp. (strain NBC37-1).